Reading from the N-terminus, the 182-residue chain is Large ribosomal subunit protein uL6 (182 aa).

It belongs to the universal ribosomal protein uL6 family. In terms of assembly, part of the 50S ribosomal subunit.

In terms of biological role, this protein binds to the 23S rRNA, and is important in its secondary structure. It is located near the subunit interface in the base of the L7/L12 stalk, and near the tRNA binding site of the peptidyltransferase center. This Dehalococcoides mccartyi (strain ATCC BAA-2266 / KCTC 15142 / 195) (Dehalococcoides ethenogenes (strain 195)) protein is Large ribosomal subunit protein uL6.